The primary structure comprises 370 residues: GTPase Obg (370 aa).

Positions 1 to 159 constitute an Obg domain; that stretch reads MKFIDEARIE…RMLRLELKVL (159 aa). Positions 160–334 constitute an OBG-type G domain; sequence ADVGLLGMPN…LCYAIYDYLA (175 aa). Residues 166-173, 191-195, 213-216, 284-287, and 315-317 each bind GTP; these read GMPNAGKS, FTTLA, DIPG, NKLD, and SAL. Ser173 and Thr193 together coordinate Mg(2+). The disordered stretch occupies residues 344–370; the sequence is EEEDLATDVRFRDAPPADGGATPGGDA.

It belongs to the TRAFAC class OBG-HflX-like GTPase superfamily. OBG GTPase family. Monomer. It depends on Mg(2+) as a cofactor.

It is found in the cytoplasm. An essential GTPase which binds GTP, GDP and possibly (p)ppGpp with moderate affinity, with high nucleotide exchange rates and a fairly low GTP hydrolysis rate. Plays a role in control of the cell cycle, stress response, ribosome biogenesis and in those bacteria that undergo differentiation, in morphogenesis control. The protein is GTPase Obg of Burkholderia ambifaria (strain MC40-6).